The following is a 742-amino-acid chain: Clamp-binding protein CrfC (742 aa).

A clamp-binding consensus region spans residues 41 to 45 (QLALP). Residues 66-402 (SRLEMVLAIV…LWEDSLFAQP (337 aa)) form the Dynamin-type G domain. The G1 motif stretch occupies residues 76 to 83 (GTMKAGKS). A G2 motif region spans residues 102 to 104 (MTA). Residues 236-239 (DTPG) are G3 motif. The tract at residues 297-300 (NKFD) is G4 motif. Residues 331–334 (FPVS) are G5 motif. Residues 440 to 472 (RAHGLNVACEQLRQNIHQIEESLQLLQLNQAQV) are a coiled coil.

The protein belongs to the TRAFAC class dynamin-like GTPase superfamily. Dynamin/Fzo/YdjA family. Forms homooligomers. Binds to the beta sliding clamp processivity factor (DnaN) in the presence and absence of DNA, may bind to the clamp itself as homodimers or trimers. Homooligomers may be able to bind more than 1 clamp complex.

The protein localises to the cytoplasm. Functionally, important for the colocalization of sister nascent DNA strands after replication fork passage during DNA replication, and for positioning and subsequent partitioning of sister chromosomes. Does not have GTPase activity on its own. This chain is Clamp-binding protein CrfC (crfC), found in Escherichia coli (strain K12).